Consider the following 101-residue polypeptide: NAD(P)H-quinone oxidoreductase subunit 4L, chloroplastic (101 aa).

A run of 3 helical transmembrane segments spans residues 2–22 (ILEHVLVLSAYLFSIGIYGLI), 32–52 (MCLELILNAVNINFVTFSDFF), and 61–81 (IFSIFVIAIAAAEAAIGLAIV).

This sequence belongs to the complex I subunit 4L family. As to quaternary structure, NDH is composed of at least 16 different subunits, 5 of which are encoded in the nucleus.

The protein resides in the plastid. It is found in the chloroplast thylakoid membrane. The enzyme catalyses a plastoquinone + NADH + (n+1) H(+)(in) = a plastoquinol + NAD(+) + n H(+)(out). It carries out the reaction a plastoquinone + NADPH + (n+1) H(+)(in) = a plastoquinol + NADP(+) + n H(+)(out). Its function is as follows. NDH shuttles electrons from NAD(P)H:plastoquinone, via FMN and iron-sulfur (Fe-S) centers, to quinones in the photosynthetic chain and possibly in a chloroplast respiratory chain. The immediate electron acceptor for the enzyme in this species is believed to be plastoquinone. Couples the redox reaction to proton translocation, and thus conserves the redox energy in a proton gradient. This chain is NAD(P)H-quinone oxidoreductase subunit 4L, chloroplastic, found in Nicotiana sylvestris (Wood tobacco).